Reading from the N-terminus, the 566-residue chain is uncharacterized protein (566 aa).

Belongs to the protein kinase superfamily. ADCK protein kinase family.

This is an uncharacterized protein from Synechocystis sp. (strain ATCC 27184 / PCC 6803 / Kazusa).